Reading from the N-terminus, the 325-residue chain is 6-phosphogluconolactonase 3, chloroplastic (325 aa).

The N-terminal 68 residues, 1-68, are a transit peptide targeting the chloroplast; the sequence is MASSSCFLRS…KSSDTRRKVK (68 aa). Positions 51–73 are disordered; it reads SIGTGSTKKSSDTRRKVKSMATT. The Microbody targeting signal motif lies at 323–325; that stretch reads SKL.

The protein belongs to the glucosamine/galactosamine-6-phosphate isomerase family. 6-phosphogluconolactonase subfamily. Interacts with TRXM2. Expressed in roots, leaves and shoots.

Its subcellular location is the plastid. It is found in the chloroplast. It localises to the peroxisome. The enzyme catalyses 6-phospho-D-glucono-1,5-lactone + H2O = 6-phospho-D-gluconate + H(+). It participates in carbohydrate degradation; pentose phosphate pathway; D-ribulose 5-phosphate from D-glucose 6-phosphate (oxidative stage): step 2/3. In terms of biological role, catalyzes the hydrolysis of 6-phosphogluconolactone to 6-phosphogluconate. Involved in the regulation of cellular redox state; enzymatic activity is required for this function. Required for sugar-dependent expression of nitrate assimilation genes in the nucleus of root cells. The chain is 6-phosphogluconolactonase 3, chloroplastic from Arabidopsis thaliana (Mouse-ear cress).